The sequence spans 406 residues: Formate-dependent phosphoribosylglycinamide formyltransferase (406 aa).

N(1)-(5-phospho-beta-D-ribosyl)glycinamide is bound by residues 27-28 (EL) and glutamate 87. Residues arginine 120, lysine 162, 167-172 (SSGKGQ), 202-205 (EGFI), and glutamate 210 each bind ATP. The ATP-grasp domain occupies 125–320 (RLAAETLGLP…EFELHARALL (196 aa)). Residues glutamate 279 and glutamate 291 each coordinate Mg(2+). N(1)-(5-phospho-beta-D-ribosyl)glycinamide-binding positions include aspartate 298, lysine 367, and 374–375 (RR).

The protein belongs to the PurK/PurT family. Homodimer.

The catalysed reaction is N(1)-(5-phospho-beta-D-ribosyl)glycinamide + formate + ATP = N(2)-formyl-N(1)-(5-phospho-beta-D-ribosyl)glycinamide + ADP + phosphate + H(+). It participates in purine metabolism; IMP biosynthesis via de novo pathway; N(2)-formyl-N(1)-(5-phospho-D-ribosyl)glycinamide from N(1)-(5-phospho-D-ribosyl)glycinamide (formate route): step 1/1. Functionally, involved in the de novo purine biosynthesis. Catalyzes the transfer of formate to 5-phospho-ribosyl-glycinamide (GAR), producing 5-phospho-ribosyl-N-formylglycinamide (FGAR). Formate is provided by PurU via hydrolysis of 10-formyl-tetrahydrofolate. In Bordetella bronchiseptica (strain ATCC BAA-588 / NCTC 13252 / RB50) (Alcaligenes bronchisepticus), this protein is Formate-dependent phosphoribosylglycinamide formyltransferase.